We begin with the raw amino-acid sequence, 394 residues long: Phosphoglycerate kinase (394 aa).

Residues 21-23 (DFN), arginine 37, 60-63 (HLGR), arginine 119, and arginine 152 contribute to the substrate site. Residues lysine 202, glutamate 324, and 350–353 (GGDS) contribute to the ATP site.

The protein belongs to the phosphoglycerate kinase family. As to quaternary structure, monomer.

Its subcellular location is the cytoplasm. The catalysed reaction is (2R)-3-phosphoglycerate + ATP = (2R)-3-phospho-glyceroyl phosphate + ADP. Its pathway is carbohydrate degradation; glycolysis; pyruvate from D-glyceraldehyde 3-phosphate: step 2/5. The polypeptide is Phosphoglycerate kinase (Carboxydothermus hydrogenoformans (strain ATCC BAA-161 / DSM 6008 / Z-2901)).